A 331-amino-acid chain; its full sequence is Myc-associated zinc finger protein (331 aa).

2 disordered regions span residues 46 to 65 (AQSP…APAA) and 108 to 131 (TVDT…SAPA). Residues 117–127 (PPAPPPPPPAV) show a composition bias toward pro residues. 4 consecutive C2H2-type zinc fingers follow at residues 177–199 (YICA…EAIH), 266–288 (HACE…KLSH), 294–316 (YQCP…VRSH), and 324–331 (YNCSHCGK).

As to quaternary structure, interacts with BPTF. Ubiquitously expressed.

It is found in the nucleus. Functionally, transcriptional regulator. Acts as a transcriptional activator that binds to purine-rich GAGA sites found in the promoter of many genes including insulin I and II and islet amyloid polypeptide. In Mesocricetus auratus (Golden hamster), this protein is Myc-associated zinc finger protein (MAZ).